The chain runs to 62 residues: Protein YnfQ (62 aa).

This sequence belongs to the YmcF/YnqF peptide family.

The polypeptide is Protein YnfQ (Escherichia coli (strain K12)).